The following is a 255-amino-acid chain: UPF0246 protein CC_3385 (255 aa).

The protein belongs to the UPF0246 family.

In Caulobacter vibrioides (strain ATCC 19089 / CIP 103742 / CB 15) (Caulobacter crescentus), this protein is UPF0246 protein CC_3385.